The chain runs to 126 residues: Histone H2B type 1-L (126 aa).

Residues 1 to 12 (MPELAKSAPAPK) are compositionally biased toward low complexity. Residues 1–36 (MPELAKSAPAPKKGSKKAVTKAQKKDGKKRKRSRKE) form a disordered region. At Pro2 the chain carries N-acetylproline. Glu3 carries the ADP-ribosyl glutamic acid modification. Lys6 bears the N6-(2-hydroxyisobutyryl)lysine; alternate mark. The residue at position 6 (Lys6) is an N6-(beta-hydroxybutyryl)lysine; alternate. N6-acetyllysine; alternate is present on Lys6. At Lys6 the chain carries N6-butyryllysine; alternate. N6-crotonyllysine; alternate is present on Lys6. Lys6 carries the N6-lactoyllysine; alternate modification. Residue Lys6 forms a Glycyl lysine isopeptide (Lys-Gly) (interchain with G-Cter in SUMO2); alternate linkage. Position 7 is an ADP-ribosylserine (Ser7). Lys12 is modified (N6-(beta-hydroxybutyryl)lysine; alternate). Lys12 and Lys13 each carry N6-acetyllysine; alternate. Residues Lys12 and Lys13 each carry the N6-crotonyllysine; alternate modification. Lys12 bears the N6-lactoyllysine; alternate mark. Residue Lys13 is modified to N6-(2-hydroxyisobutyryl)lysine; alternate. A Phosphoserine; by STK4/MST1 modification is found at Ser15. N6-acetyllysine; alternate is present on residues Lys16, Lys17, Lys21, and Lys24. N6-crotonyllysine; alternate occurs at positions 16, 17, 21, and 24. N6-lactoyllysine; alternate is present on residues Lys16, Lys17, Lys21, and Lys24. Lys17 and Lys21 each carry N6-(beta-hydroxybutyryl)lysine; alternate. Lys17 carries the N6-glutaryllysine; alternate modification. 2 positions are modified to N6-(2-hydroxyisobutyryl)lysine; alternate: Lys21 and Lys24. At Lys21 the chain carries N6-butyryllysine; alternate. Residue Lys21 forms a Glycyl lysine isopeptide (Lys-Gly) (interchain with G-Cter in SUMO2); alternate linkage. Lys25 is modified (N6-(2-hydroxyisobutyryl)lysine). An N6-(2-hydroxyisobutyryl)lysine; alternate modification is found at Lys35. Lys35 bears the N6-(beta-hydroxybutyryl)lysine; alternate mark. Lys35 carries the post-translational modification N6-crotonyllysine; alternate. Lys35 carries the N6-glutaryllysine; alternate modification. Lys35 is modified (N6-succinyllysine; alternate). Lys35 is covalently cross-linked (Glycyl lysine isopeptide (Lys-Gly) (interchain with G-Cter in ubiquitin); alternate). PolyADP-ribosyl glutamic acid is present on Glu36. Ser37 carries the post-translational modification Phosphoserine; by AMPK. Residues Lys44, Lys47, and Lys58 each carry the N6-(2-hydroxyisobutyryl)lysine; alternate modification. Lys44 carries the N6-lactoyllysine; alternate modification. Residues Lys44 and Lys47 each carry the N6-glutaryllysine; alternate modification. The residue at position 47 (Lys47) is an N6-methyllysine; alternate. Residue Lys58 is modified to N6,N6-dimethyllysine; alternate. Arg80 bears the Dimethylated arginine mark. Position 86 is an N6-(2-hydroxyisobutyryl)lysine; alternate (Lys86). Lys86 is subject to N6-(beta-hydroxybutyryl)lysine; alternate. Position 86 is an N6-acetyllysine; alternate (Lys86). N6-lactoyllysine; alternate is present on Lys86. Lys86 carries the post-translational modification N6,N6,N6-trimethyllysine; alternate. Omega-N-methylarginine is present on residues Arg87 and Arg93. Position 109 is an N6-(2-hydroxyisobutyryl)lysine; alternate (Lys109). An N6-lactoyllysine; alternate modification is found at Lys109. An N6-glutaryllysine; alternate modification is found at Lys109. Lys109 is subject to N6-methyllysine; alternate. An O-linked (GlcNAc) serine glycan is attached at Ser113. Thr116 bears the Phosphothreonine mark. N6-(2-hydroxyisobutyryl)lysine; alternate is present on residues Lys117 and Lys121. 2 positions are modified to N6-(beta-hydroxybutyryl)lysine; alternate: Lys117 and Lys121. Lys117 and Lys121 each carry N6-lactoyllysine; alternate. Residues Lys117 and Lys121 each carry the N6-glutaryllysine; alternate modification. N6-succinyllysine; alternate is present on residues Lys117 and Lys121. Lys117 is modified (N6-malonyllysine; alternate). Lys117 is subject to N6-methylated lysine; alternate. Residue Lys121 forms a Glycyl lysine isopeptide (Lys-Gly) (interchain with G-Cter in ubiquitin); alternate linkage.

Belongs to the histone H2B family. The nucleosome is a histone octamer containing two molecules each of H2A, H2B, H3 and H4 assembled in one H3-H4 heterotetramer and two H2A-H2B heterodimers. The octamer wraps approximately 147 bp of DNA. In terms of processing, monoubiquitination at Lys-35 (H2BK34Ub) by the MSL1/MSL2 dimer is required for histone H3 'Lys-4' (H3K4me) and 'Lys-79' (H3K79me) methylation and transcription activation at specific gene loci, such as HOXA9 and MEIS1 loci. Similarly, monoubiquitination at Lys-121 (H2BK120Ub) by the RNF20/40 complex gives a specific tag for epigenetic transcriptional activation and is also prerequisite for histone H3 'Lys-4' and 'Lys-79' methylation. It also functions cooperatively with the FACT dimer to stimulate elongation by RNA polymerase II. H2BK120Ub also acts as a regulator of mRNA splicing: deubiquitination by USP49 is required for efficient cotranscriptional splicing of a large set of exons. Phosphorylation at Ser-37 (H2BS36ph) by AMPK in response to stress promotes transcription. Phosphorylated on Ser-15 (H2BS14ph) by STK4/MST1 during apoptosis; which facilitates apoptotic chromatin condensation. Also phosphorylated on Ser-15 in response to DNA double strand breaks (DSBs), and in correlation with somatic hypermutation and immunoglobulin class-switch recombination. Post-translationally, glcNAcylation at Ser-113 promotes monoubiquitination of Lys-121. It fluctuates in response to extracellular glucose, and associates with transcribed genes. In terms of processing, ADP-ribosylated by PARP1 or PARP2 on Ser-7 (H2BS6ADPr) in response to DNA damage. H2BS6ADPr promotes recruitment of CHD1L. Mono-ADP-ribosylated on Glu-3 (H2BE2ADPr) by PARP3 in response to single-strand breaks. Poly ADP-ribosylation on Glu-36 (H2BE35ADPr) by PARP1 regulates adipogenesis: it inhibits phosphorylation at Ser-37 (H2BS36ph), thereby blocking expression of pro-adipogenetic genes. Crotonylation (Kcr) is specifically present in male germ cells and marks testis-specific genes in post-meiotic cells, including X-linked genes that escape sex chromosome inactivation in haploid cells. Crotonylation marks active promoters and enhancers and confers resistance to transcriptional repressors. It is also associated with post-meiotically activated genes on autosomes. Post-translationally, lactylated in macrophages by EP300/P300 by using lactoyl-CoA directly derived from endogenous or exogenous lactate, leading to stimulates gene transcription.

Its subcellular location is the nucleus. The protein resides in the chromosome. Functionally, core component of nucleosome. Nucleosomes wrap and compact DNA into chromatin, limiting DNA accessibility to the cellular machineries which require DNA as a template. Histones thereby play a central role in transcription regulation, DNA repair, DNA replication and chromosomal stability. DNA accessibility is regulated via a complex set of post-translational modifications of histones, also called histone code, and nucleosome remodeling. The protein is Histone H2B type 1-L of Homo sapiens (Human).